A 355-amino-acid chain; its full sequence is F-box only protein 32 (355 aa).

The short motif at 62-67 (KKRKKD) is the Nuclear localization signal element. The short motif at 169 to 173 (LLQTL) is the Nuclear export signal element. The F-box domain maps to 223–271 (LTFTDLPLCLQLNIMQRLSDGRDLVSLGQAAPDLHVLSEDRLLWKKLCQ). The short motif at 280–295 (RKRLILSDKGQLDWKK) is the Bipartite nuclear localization signal element.

As to quaternary structure, part of the SCF (SKP1-CUL1-F-box) E3 ubiquitin-protein ligase complex SCF(FBXO32) formed of CUL1, SKP1, RBX1 and FBXO32. Specifically expressed in cardiac and skeletal muscle.

The protein localises to the cytoplasm. It is found in the nucleus. The protein operates within protein modification; protein ubiquitination. Functionally, substrate recognition component of a SCF (SKP1-CUL1-F-box protein) E3 ubiquitin-protein ligase complex which mediates the ubiquitination and subsequent proteasomal degradation of target proteins. Probably recognizes and binds to phosphorylated target proteins during skeletal muscle atrophy. Recognizes TERF1. The sequence is that of F-box only protein 32 (FBXO32) from Homo sapiens (Human).